A 909-amino-acid chain; its full sequence is Golgin subfamily A member 6-like protein 2 (909 aa).

The span at 1-11 (MWPQPHLPPHP) shows a compositional bias: pro residues. Disordered stretches follow at residues 1–88 (MWPQ…ASHQ), 300–362 (ERLR…EQEE), 381–408 (QEKQ…RLRE), 425–494 (KMRE…QRLP), and 524–909 (EEMW…QSSL). Positions 13-31 (MSEKTRQNKLAEAKKKFTD) are enriched in basic and acidic residues. Polar residues predominate over residues 53–77 (NNGTNPETTTSEGCHSPEDTQQNRA). The span at 78–88 (QLKEEKKASHQ) shows a compositional bias: basic and acidic residues. Residues 192 to 526 (HKKADRYIEE…EEKIRDQEEM (335 aa)) are a coiled coil. Basic and acidic residues-rich tracts occupy residues 425-478 (KMRE…KQEE) and 524-542 (EEMW…MREQ). A compositionally biased stretch (acidic residues) spans 607-620 (AGGEEDAGAGEEDM). Gly residues-rich tracts occupy residues 641–654 (GGGG…GEDA) and 676–689 (GAGG…GEDV). A compositionally biased stretch (basic residues) spans 692-719 (GRRRCGSSRGCRNRRRSCGNTRRCRSRR). Low complexity predominate over residues 746-755 (AGAEDVAAGG). The span at 757–766 (DAGEEEDAGG) shows a compositional bias: acidic residues. Positions 791–871 (GAGGEDVGAG…AGGEDVGAGG (81 aa)) are enriched in gly residues. Residues 872–892 (DAREGGEDTRSEREDAGEAAR) show a composition bias toward basic and acidic residues.

The protein belongs to the GOLGA6 family.

In Homo sapiens (Human), this protein is Golgin subfamily A member 6-like protein 2 (GOLGA6L2).